The following is a 222-amino-acid chain: Cysteine protease inhibitor 9 (222 aa).

An N-terminal signal peptide occupies residues 1–26 (MKSINILSFLLLSSTLSLVAFARSFS). The propeptide occupies 27–42 (SENPIVLPSTCHDDDN). Positions 29-34 (NPIVLP) match the Vacuolar targeting signal motif. Intrachain disulfides connect Cys-84–Cys-136 and Cys-185–Cys-191.

It belongs to the protease inhibitor I3 (leguminous Kunitz-type inhibitor) family. In terms of tissue distribution, tuber.

The protein resides in the vacuole. Putative inhibitor of cysteine proteases. Does not inhibit papain. May protect the plant by inhibiting proteases of invading organisms. In Solanum tuberosum (Potato), this protein is Cysteine protease inhibitor 9.